We begin with the raw amino-acid sequence, 105 residues long: MIASKFGIGQQVRHKLLGYLGVIIDVDPEYSLEKPSLDDIAADDSLRTAPWYHVVMEDEEGKPVHIYLAEAQLGYESFPVHPEQPTLDELAESIRLQLQAPRLRN.

The protein belongs to the HspQ family.

The protein resides in the cytoplasm. Its function is as follows. Involved in the degradation of certain denaturated proteins, including DnaA, during heat shock stress. The sequence is that of Heat shock protein HspQ from Sodalis glossinidius (strain morsitans).